Reading from the N-terminus, the 916-residue chain is Oxysterol-binding protein 2 (916 aa).

Disordered regions lie at residues 1-20 (MGKA…SRGL), 34-121 (TAAP…PFTK), and 139-163 (PESG…TPLG). A compositionally biased stretch (pro residues) spans 49–58 (EPKPQPQPVP). Residues 79 to 92 (RSEPVSETTSEPEP) are compositionally biased toward low complexity. Over residues 99 to 113 (ELLQGSRPGSESSSG) the composition is skewed to polar residues. The segment covering 144–155 (LPALKPLPLLRP) has biased composition (low complexity). Residues 182–274 (LDSFEGWLLK…WITALELAKA (93 aa)) form the PH domain. Disordered regions lie at residues 282-301 (THSD…DKSE) and 417-448 (FHSA…EEDE). Ser287 carries the post-translational modification Phosphoserine. A Phosphoserine modification is found at Ser763. The disordered stretch occupies residues 813 to 842 (EGVAPTDSRLRPDQRLMEKGRWDEANTEKQ).

The protein belongs to the OSBP family. As to quaternary structure, interacts with CCDC159. In terms of tissue distribution, expressed mainly in retina, testis, and fetal liver.

The protein resides in the membrane. Its subcellular location is the cytoplasmic vesicle. It localises to the secretory vesicle. The protein localises to the acrosome. In terms of biological role, binds 7-ketocholesterol. Acts during spermatid development where its function is required prior to the removal of cytoplasm from the sperm head. The sequence is that of Oxysterol-binding protein 2 (OSBP2) from Homo sapiens (Human).